The following is a 216-amino-acid chain: Small ribosomal subunit protein uS3c (216 aa).

The KH type-2 domain occupies I43 to T118.

Belongs to the universal ribosomal protein uS3 family. As to quaternary structure, part of the 30S ribosomal subunit.

Its subcellular location is the plastid. The protein resides in the chloroplast. The sequence is that of Small ribosomal subunit protein uS3c (rps3) from Eucalyptus globulus subsp. globulus (Tasmanian blue gum).